The chain runs to 367 residues: MTDKEKKPCAIIVVGMAGSGKTTFMQQLNAHLHSKNKPPYILNLDPAVRNLPYEANIDIRDTINYKEVMKQYNLGPNGGIMTSLNLFVTKFDQVLKILEKRAPTVDHILIDTPGQIEIFQWSASGSIICDTLASSWPTCIAYVVDTPRATSTSTWMSSMLYACSMLYKAKLPLIIVYNKCDVQDSEFAKKWMTDFEEFQQAVTKDEGMSSEGATSGYMGSLVNSMSLMLEEFYRHLDFVSCSSVTGEGMDDFLEAVKAKVKEYEEEYVPEMERMKEIQRQTKERQKEAQLSKLMKDMHVSKDKEDVGLTVSDAEDEYNGELVDPDEDDGLTAEDREDMIKQYRVALGISDDISDEKLLEMLTERMKQ.

Residues 15-22 (GMAGSGKT) and 18-23 (GSGKTT) each bind GTP. The short motif at 75-77 (GPN) is the Gly-Pro-Asn (GPN)-loop; involved in dimer interface element. 178–181 (NKCD) contributes to the GTP binding site. Positions 247 to 290 (EGMDDFLEAVKAKVKEYEEEYVPEMERMKEIQRQTKERQKEAQL) form a coiled coil. Residues 306–332 (VGLTVSDAEDEYNGELVDPDEDDGLTA) are disordered. Residue S311 is modified to Phosphoserine. A compositionally biased stretch (acidic residues) spans 312–332 (DAEDEYNGELVDPDEDDGLTA).

This sequence belongs to the GPN-loop GTPase family. As to quaternary structure, heterodimers with gpn2 or fet5/gpn3. Binds to RNA polymerase II (RNAPII).

Its subcellular location is the cytoplasm. In terms of biological role, small GTPase required for proper nuclear import of RNA polymerase II (RNAPII). May act at an RNAP assembly step prior to nuclear import. The polypeptide is GPN-loop GTPase 1 (Schizosaccharomyces pombe (strain 972 / ATCC 24843) (Fission yeast)).